The chain runs to 273 residues: Spore development regulator vosA (273 aa).

The span at Ser-66 to Gln-75 shows a compositional bias: low complexity. A disordered region spans residues Ser-66–Ala-86. One can recognise a Velvet domain in the interval Glu-70 to Lys-253. Residues Phe-211–Lys-218 carry the Nuclear localization signal motif. The segment covering Lys-254–Arg-267 has biased composition (basic and acidic residues). The interval Lys-254–Asp-273 is disordered.

Belongs to the velvet family. VosA subfamily. Forms a heterodimeric complex with velB; the formation of the velB-vosA complex is light-dependent.

It localises to the nucleus. In terms of biological role, component of the velB-vosA heterodimeric complex that plays a dual role in activating genes associated with spore maturation and repressing certain development-associated genes. The complex binds DNA through the DNA-binding domain of vosA that recognizes an 11-nucleotide consensus sequence 5'-CTGGCCGCGGC-3' consisting of two motifs in the promoters of key developmental regulatory genes. Positively regulates the expression of wetA and represses abaA and brlA. Acts as a crucial regulator of both conidiation capacity and conidial quality. Responsible for the synthesis and accumulation of intracellular trehalose. In Beauveria bassiana (strain ARSEF 2860) (White muscardine disease fungus), this protein is Spore development regulator vosA.